Here is a 632-residue protein sequence, read N- to C-terminus: Extracellular metalloproteinase 2 (632 aa).

Positions Met-1–Gly-19 are cleaved as a signal peptide. Residues Leu-20–Ser-244 constitute a propeptide that is removed on maturation. Residue Asn-270 is glycosylated (N-linked (GlcNAc...) asparagine). His-429 contributes to the Zn(2+) binding site. Glu-430 is a catalytic residue. Residue His-433 participates in Zn(2+) binding.

It belongs to the peptidase M36 family. Requires Zn(2+) as cofactor.

Its subcellular location is the secreted. Its function is as follows. Secreted metalloproteinase probably acting as a virulence factor. This is Extracellular metalloproteinase 2 (MEP2) from Trichophyton tonsurans (Scalp ringworm fungus).